The chain runs to 52 residues: Large ribosomal subunit protein bL33 (52 aa).

The protein belongs to the bacterial ribosomal protein bL33 family.

This is Large ribosomal subunit protein bL33 from Anaeromyxobacter sp. (strain Fw109-5).